Here is a 190-residue protein sequence, read N- to C-terminus: Anthranilate synthase component II (190 aa).

The Glutamine amidotransferase type-1 domain occupies 1–190 (MILIIDNYDS…ENFCTGIAKA (190 aa)). 51 to 53 (GPG) is an L-glutamine binding site. The Nucleophile; for GATase activity role is filled by cysteine 76. Residues glutamine 80 and 126–127 (SL) each bind L-glutamine. Active-site residues include histidine 167 and glutamate 169.

In terms of assembly, tetramer of two components I and two components II.

The enzyme catalyses chorismate + L-glutamine = anthranilate + pyruvate + L-glutamate + H(+). It participates in amino-acid biosynthesis; L-tryptophan biosynthesis; L-tryptophan from chorismate: step 1/5. The protein is Anthranilate synthase component II (trpG2) of Haloarcula marismortui (strain ATCC 43049 / DSM 3752 / JCM 8966 / VKM B-1809) (Halobacterium marismortui).